The primary structure comprises 354 residues: Protein OVEREXPRESSOR OF CATIONIC PEROXIDASE 3 (354 aa).

The short motif at 63–70 (NRKGFVSS) is the Nuclear localization signal 1 element. Disordered stretches follow at residues 65–98 (KGFVSSSSSSPKKNKKKSLDGADNGGGEEEEDPF) and 151–186 (TGDVDVDVDNDDDDNDDDDNDDDDDDSEEDERPTKL). The segment covering 154–181 (VDVDVDNDDDDNDDDDNDDDDDDSEEDE) has biased composition (acidic residues). The short motif at 191 to 198 (LKRLAYAL) is the Nuclear localization signal 2 element. Residues 243 to 264 (KPPVAAPENSSPDPSPVESLSA) are disordered. The segment at residues 286-345 (RWSAQKRVKKAHIETLEKVYRRSKRPTNAVVSSIVQVTNLPRKRVLKWFEDKRAEDGVPD) is a DNA-binding region (homeobox). The short motif at 293–300 (VKKAHIET) is the Nuclear localization signal 3 element.

The protein resides in the nucleus. Its function is as follows. May modulate chromatin structure by regulation of nucleosome assembly/disassembly. Homeodomain transcription factor that mediates jasmonic acid (JA)-mediated COI1-dependent and abscisic acid (ABA)-mediated PMR4-dependent resistance to infection by necrotrophic fungal pathogens (e.g. B.cinerea and P.cucumerina) and bacterial pathogens (e.g. P.syringae DC3000); this resistance involves at least callose deposition. Required for the P.fluorescens WCS417r-triggered JA-dependent induced systemic resistance (ISR) against both P.syringae DC3000 and H.arabidopsidis. Negative regulator of the ABA-dependent drought resistance. The polypeptide is Protein OVEREXPRESSOR OF CATIONIC PEROXIDASE 3 (Arabidopsis thaliana (Mouse-ear cress)).